Reading from the N-terminus, the 89-residue chain is RNA-binding protein Hfq (89 aa).

One can recognise a Sm domain in the interval Glu-9–Val-68. Positions Thr-70–Ile-89 are disordered. Residues Thr-78–Ile-89 are compositionally biased toward polar residues.

It belongs to the Hfq family. Homohexamer.

In terms of biological role, RNA chaperone that binds small regulatory RNA (sRNAs) and mRNAs to facilitate mRNA translational regulation in response to envelope stress, environmental stress and changes in metabolite concentrations. Also binds with high specificity to tRNAs. The polypeptide is RNA-binding protein Hfq (Alkalilimnicola ehrlichii (strain ATCC BAA-1101 / DSM 17681 / MLHE-1)).